Here is a 2904-residue protein sequence, read N- to C-terminus: Highly reducing polyketide synthase bet1 (2904 aa).

Positions 8-441 (NEPIAIVGSG…GTNAHAIVES (434 aa)) constitute a Ketosynthase family 3 (KS3) domain. Catalysis depends on for beta-ketoacyl synthase activity residues Cys-181, His-320, and His-361. The acyl transferase (AT) domain stretch occupies residues 553–875 (VFTGQGAQYA…PYHGTLLRGG (323 aa)). The tract at residues 948-1081 (HQLLGDVSPD…GELKVVLVDE (134 aa)) is N-terminal hotdog fold. The region spanning 948-1257 (HQLLGDVSPD…FKPVGSDASN (310 aa)) is the PKS/mFAS DH domain. Residues 971–1255 (PREMTWLEGH…VKFKPVGSDA (285 aa)) form a dehydratase (DH) domain region. His-980 serves as the catalytic Proton acceptor; for dehydratase activity. The interval 1098–1257 (MIPVQPSRLY…FKPVGSDASN (160 aa)) is C-terminal hotdog fold. Asp-1159 serves as the catalytic Proton donor; for dehydratase activity. Residues 1411-1596 (KQSTLWVASI…GFSGIDTMSP (186 aa)) form a methyltransferase (cMeT) domain region. The interval 2125-2298 (TYWLVGLSGA…RSSVVNVGAI (174 aa)) is ketoreductase (KR)domain. Positions 2407–2486 (EVANVIKQAY…SLVELAAESI (80 aa)) constitute a Carrier domain. An O-(pantetheine 4'-phosphoryl)serine modification is found at Ser-2445. Residues 2492–2543 (PGVPQANANPNGPSSPDSDATESSNQNSDVDVTSTRATSPSTPAATSPDSNV) are disordered. Positions 2497–2523 (ANANPNGPSSPDSDATESSNQNSDVDV) are enriched in polar residues. Low complexity predominate over residues 2524–2541 (TSTRATSPSTPAATSPDS). Positions 2585–2817 (LTGCSGLLGH…DLVSVETCCE (233 aa)) are reductase (R) domain.

Pantetheine 4'-phosphate serves as cofactor.

It catalyses the reaction 7 malonyl-CoA + acetyl-CoA + 10 AH2 + 5 S-adenosyl-L-methionine + 2 H(+) = dehydroprobetaenone I + 10 A + 5 S-adenosyl-L-homocysteine + 7 CO2 + 8 CoA + 6 H2O. It functions in the pathway mycotoxin biosynthesis. Highly reducing polyketide synthase; part of the gene cluster that mediates the biosynthesis of betaenones, phytotoxic polyketides involved in leaf spot disease in sugar beets. The first step of the pathway is the synthesis of dehydroprobetaenone I by the polyketide synthase bet1 and the enoyl reductase bet3 via condensation of one acetyl-CoA starter unit with 7 malonyl-CoA units and 5 methylations. The C-terminal reductase (R) domain of bet1 catalyzes the reductive release of the polyketide chain. Because bet1 lacks a designated enoylreductase (ER) domain, the required activity is provided the enoyl reductase bet3. The short-chain dehydrogenase/reductase bet4 then catalyzes reduction of dehydroprobetaenone I to probetaenone I. The cytochrome P450 monooxygenase bet2 catalyzes successive epoxidation, oxidation (resulting from epoxide opening) and hydroxylation to install a tertiary alcohol in the decaline ring to yield betaenone C from dehydroprobetaenone I and betaenone B from probetaenone I. The FAD-linked oxidoreductase (orf1) is probably responsible for the conversion of betaenone C to betaenone A via an intramolecular aldol reaction between C-1 and C-17 to form the bridged tricyclic system in betaenone A. This chain is Highly reducing polyketide synthase bet1, found in Neocamarosporium betae (Beet black rot fungus).